A 273-amino-acid chain; its full sequence is Release factor glutamine methyltransferase (273 aa).

Residues 109–113, aspartate 132, tryptophan 159, and asparagine 176 each bind S-adenosyl-L-methionine; that span reads GTGSG. Substrate is bound at residue 176-179; the sequence is NPPY.

Belongs to the protein N5-glutamine methyltransferase family. PrmC subfamily.

The catalysed reaction is L-glutaminyl-[peptide chain release factor] + S-adenosyl-L-methionine = N(5)-methyl-L-glutaminyl-[peptide chain release factor] + S-adenosyl-L-homocysteine + H(+). Its function is as follows. Methylates the class 1 translation termination release factors RF1/PrfA and RF2/PrfB on the glutamine residue of the universally conserved GGQ motif. The chain is Release factor glutamine methyltransferase from Neisseria gonorrhoeae (strain ATCC 700825 / FA 1090).